Consider the following 94-residue polypeptide: Copper resistance protein K (94 aa).

An N-terminal signal peptide occupies residues Met-1 to Ala-20.

Monomer in the copper-bound form. Homodimer as apoprotein. Dissociates into monomers upon copper binding.

The protein resides in the periplasm. In terms of biological role, involved in resistance to copper. Can bind up to 2 copper ions. Has higher affinity for Cu(+) than for Cu(2+). This Cupriavidus metallidurans (strain ATCC 43123 / DSM 2839 / NBRC 102507 / CH34) (Ralstonia metallidurans) protein is Copper resistance protein K (copK).